A 463-amino-acid chain; its full sequence is Probable diacyglycerol O-acyltransferase tgs1 (463 aa).

Residue Met-1 is modified to N-acetylmethionine. His-137 acts as the Proton acceptor in catalysis.

The protein belongs to the long-chain O-acyltransferase family.

The enzyme catalyses an acyl-CoA + a 1,2-diacyl-sn-glycerol = a triacyl-sn-glycerol + CoA. The catalysed reaction is di-(9Z)-octadecenoylglycerol + (9Z)-octadecenoyl-CoA = 1,2,3-tri-(9Z-octadecenoyl)-glycerol + CoA. It participates in glycerolipid metabolism; triacylglycerol biosynthesis. Catalyzes the terminal and only committed step in triacylglycerol synthesis by using diacylglycerol and fatty acyl CoA as substrates. Required for storage lipid synthesis. Its function is as follows. Upon expression in E.coli functions as a triacylglycerol synthase, making triacylglycerol (TG) from diolein and long-chain fatty acyl-CoA. Prefers C(26:0)-CoA over C(18:1)-CoA. TG synthesis activity increases in M.tuberculosis upon oxygen depletion and NO treatment, with concomitant accumulation of TG in inclusion bodies. As disruption of the gene encoding this protein obviates TG synthesis this seems to be the major enzyme involved in production of TG. Has no wax synthase activity to produce wax esters. This Mycobacterium tuberculosis (strain ATCC 25618 / H37Rv) protein is Probable diacyglycerol O-acyltransferase tgs1 (tgs1).